The following is a 567-amino-acid chain: ERO1-like protein 2 (567 aa).

A signal peptide spans 1–22 (MKIAKGLVGLLILYKNVCQVLC). N-linked (GlcNAc...) asparagine glycosylation occurs at Asn49. Disulfide bonds link Cys88/Cys386, Cys98/Cys103, Cys154/Cys325, and Cys389/Cys392. 6 residues coordinate FAD: Arg188, Thr190, Trp201, Ser258, His261, and Lys290. Cys389 acts as the Nucleophile in catalysis. The active site involves Cys392. An N-linked (GlcNAc...) asparagine glycan is attached at Asn546.

It belongs to the EROs family. In terms of assembly, may function both as a monomer and a homodimer. The cofactor is FAD. In terms of processing, N-glycosylated.

The protein localises to the endoplasmic reticulum membrane. Functionally, essential oxidoreductase that oxidizes proteins in the endoplasmic reticulum to produce disulfide bonds. Acts by oxidizing directly pdi1 isomerase through a direct disulfide exchange. Does not act as a direct oxidant of folding substrate, but relies on pdi1 to transfer oxidizing equivalent. Does not oxidize all pdi related proteins, suggesting that it can discriminate between pdi1 and related proteins. Its reoxidation probably involves electron transfer to molecular oxygen via FAD. Acts independently of glutathione. May be responsible for a significant proportion of reactive oxygen species (ROS) in the cell, thereby being a source of oxidative stress. The polypeptide is ERO1-like protein 2 (ero12) (Schizosaccharomyces pombe (strain 972 / ATCC 24843) (Fission yeast)).